The following is a 209-amino-acid chain: MNKIISNKIINNNIIFRNNFNNLFFIRNFINNKNNNNNNNNNNNNNNNNNNRNKKLKYSPNHQWIKISENKDFATIGITNYVSDIVNNEFNKILKIKLPKINDKIRLNQPFLSIWTKEEENIQFKSPLSGIVSKVNNKFNNQQTTTISTKTTTTTTKIKPKLPLKSNSLFFNNDQDSWTIELKINEPFQTNHLMTEEEYAHYCENTDYK.

Over residues 35-51 (NNNNNNNNNNNNNNNNN) the composition is skewed to low complexity. A disordered region spans residues 35–56 (NNNNNNNNNNNNNNNNNRNKKL). The 87-residue stretch at 73 to 159 (FATIGITNYV…KTTTTTTKIK (87 aa)) folds into the Lipoyl-binding domain.

It belongs to the GcvH family.

The sequence is that of Glycine cleavage system H-like protein gcvH4 (gcvH4) from Dictyostelium discoideum (Social amoeba).